The sequence spans 435 residues: Trigger factor (435 aa).

Residues 163 to 248 (GDFVTFDFKG…IKEIKVKELP (86 aa)) enclose the PPIase FKBP-type domain.

This sequence belongs to the FKBP-type PPIase family. Tig subfamily.

The protein resides in the cytoplasm. It carries out the reaction [protein]-peptidylproline (omega=180) = [protein]-peptidylproline (omega=0). Functionally, involved in protein export. Acts as a chaperone by maintaining the newly synthesized protein in an open conformation. Functions as a peptidyl-prolyl cis-trans isomerase. The polypeptide is Trigger factor (Citrifermentans bemidjiense (strain ATCC BAA-1014 / DSM 16622 / JCM 12645 / Bem) (Geobacter bemidjiensis)).